The following is a 268-amino-acid chain: Large ribosomal subunit protein uL4 (268 aa).

This sequence belongs to the universal ribosomal protein uL4 family. In terms of assembly, part of the 50S ribosomal subunit.

One of the primary rRNA binding proteins, this protein initially binds near the 5'-end of the 23S rRNA. It is important during the early stages of 50S assembly. It makes multiple contacts with different domains of the 23S rRNA in the assembled 50S subunit and ribosome. In terms of biological role, forms part of the polypeptide exit tunnel. In Nanoarchaeum equitans (strain Kin4-M), this protein is Large ribosomal subunit protein uL4.